Reading from the N-terminus, the 375-residue chain is Monocyte differentiation antigen CD14 (375 aa).

A signal peptide spans 1–19; the sequence is MERASCLLLLLLPLVHVSA. Intrachain disulfides connect C25–C36 and C34–C51. N37 is a glycosylation site (N-linked (GlcNAc...) asparagine). LRR repeat units follow at residues 54–82, 83–118, 119–144, 145–172, 173–196, 197–224, 225–251, 252–278, 279–299, 300–321, and 322–349; these read AVEVEIHAGGLNLEPFLKRVDADADPRQY, ADTVKALRVRRLTVGAAQVPAQLLVGALRVLAYSRL, KELTLEDLKITGTMPPLPLEATGLAL, SSLRLRNVSWATGRSWLAELQQWLKPGL, KVLSIAQAHSPAFSCEQVRAFPAL, TSLDLSDNPGLGERGLMAALCPHKFPAI, QNLALRNTGMETPTGVCAALAAAGVQP, HSLDLSHNSLRATVNPSAPRCMWSSAL, NSLNLSFAGLEQVPKGLPAKL, RVLDLSCNRLNRAPQPDELPEV, and DNLTLDGNPFLVPGTALPHEGSMNSGVV. N151 is a glycosylation site (N-linked (GlcNAc...) asparagine). Disulfide bonds link C187–C217 and C241–C272. The N-linked (GlcNAc...) asparagine glycan is linked to N282. The tract at residues 290–375 is required for response to bacterial lipopolysaccharide (LPS); sequence QVPKGLPAKL…VLLQGARGFA (86 aa). The N-linked (GlcNAc...) asparagine glycan is linked to N323. O-linked (GalNAc...) threonine glycosylation occurs at T336. The GPI-anchor amidated asparagine moiety is linked to residue N345. Residues 346–375 constitute a propeptide, removed in mature form; that stretch reads SGVVPACARSTLSVGVSGTLVLLQGARGFA.

Interacts with LPS-bound LPB. Belongs to the lipopolysaccharide (LPS) receptor, a multi-protein complex containing at least CD14, LY96 and TLR4. Interacts with LPAR1. Interacts with the TLR2:TLR6 or TLR2:TLR1 heterodimers; upon interaction with ligands such as diacylated lipopeptides and triacylated lipopeptides, respectively. Interacts with MYO18A. Interacts with FSTL1. Post-translationally, N- and O- glycosylated. O-glycosylated with a core 1 or possibly core 8 glycan. In terms of tissue distribution, detected on macrophages (at protein level). Expressed strongly on the surface of monocytes and weakly on the surface of granulocytes; also expressed by most tissue macrophages.

The protein localises to the cell membrane. It is found in the secreted. The protein resides in the membrane raft. It localises to the golgi apparatus. Functionally, coreceptor for bacterial lipopolysaccharide. In concert with LBP, binds to monomeric lipopolysaccharide and delivers it to the LY96/TLR4 complex, thereby mediating the innate immune response to bacterial lipopolysaccharide (LPS). Acts via MyD88, TIRAP and TRAF6, leading to NF-kappa-B activation, cytokine secretion and the inflammatory response. Acts as a coreceptor for TLR2:TLR6 heterodimer in response to diacylated lipopeptides and for TLR2:TLR1 heterodimer in response to triacylated lipopeptides, these clusters trigger signaling from the cell surface and subsequently are targeted to the Golgi in a lipid-raft dependent pathway. Binds electronegative LDL (LDL(-)) and mediates the cytokine release induced by LDL(-). This is Monocyte differentiation antigen CD14 (CD14) from Homo sapiens (Human).